An 89-amino-acid polypeptide reads, in one-letter code: Putative antitoxin VapB42 (89 aa).

Possibly the antitoxin component of a type II toxin-antitoxin (TA) system. Its cognate toxin is VapC42 (Potential). In Mycobacterium tuberculosis (strain CDC 1551 / Oshkosh), this protein is Putative antitoxin VapB42 (vapB42).